The primary structure comprises 384 residues: Carbazole 1,9a-dioxygenase, terminal oxygenase component CarAa (384 aa).

In terms of domain architecture, Rieske spans 29 to 135; the sequence is WYPVMFSKEI…VQEAKGCVFI (107 aa). Positions 69, 71, 90, and 93 each coordinate [2Fe-2S] cluster.

In terms of assembly, homotrimer. Carbazole 1,9a-dioxygenase complex consists of a terminal oxygenase component CarAa, a ferredoxin reductase component CarAd and a ferredoxin component CarAc. [2Fe-2S] cluster is required as a cofactor.

It catalyses the reaction 9H-carbazole + NADH + O2 + H(+) = 2'-aminobiphenyl-2,3-diol + NAD(+). The catalysed reaction is 9H-carbazole + NADPH + O2 + H(+) = 2'-aminobiphenyl-2,3-diol + NADP(+). Functionally, part of the multicomponent carbazole 1,9a-dioxygenase (CARDO), that converts carbazole (CAR) into 2-aminobiphenyl-2,3-diol. Catalyzes the dioxygenation at the angular (C-9a) and adjacent (C-1) positions of carbazole to yield a highly unstable cis-hydrodiol intermediate which is spontaneously converted to 2-aminobiphenyl-2,3-diol. It is also able to attack the angular position adjacent of hetero atom of heterocyclic aromatic compounds such as polychlorinated dibenzo-p-dioxin (DD) and dibenzofuran (DBF). It was also shown that CARDO has the ability to metabolize biphenyl and polycyclic aromatic hydrocarbons, such as naphthalene and phenanthrene. This chain is Carbazole 1,9a-dioxygenase, terminal oxygenase component CarAa (carAa), found in Metapseudomonas resinovorans (Pseudomonas resinovorans).